We begin with the raw amino-acid sequence, 233 residues long: uncharacterized protein (233 aa).

Transmembrane regions (helical) follow at residues Leu-4–Thr-24, Phe-35–Ser-55, and Ile-66–Leu-86.

Its subcellular location is the cell membrane. This is an uncharacterized protein from Sinorhizobium sp.